We begin with the raw amino-acid sequence, 367 residues long: Chorismate synthase (367 aa).

NADP(+) is bound by residues arginine 48 and arginine 54. FMN contacts are provided by residues 125–127 (RSS), 238–239 (NA), glycine 278, 293–297 (KPTSS), and arginine 319.

This sequence belongs to the chorismate synthase family. In terms of assembly, homotetramer. Requires FMNH2 as cofactor.

It carries out the reaction 5-O-(1-carboxyvinyl)-3-phosphoshikimate = chorismate + phosphate. Its pathway is metabolic intermediate biosynthesis; chorismate biosynthesis; chorismate from D-erythrose 4-phosphate and phosphoenolpyruvate: step 7/7. In terms of biological role, catalyzes the anti-1,4-elimination of the C-3 phosphate and the C-6 proR hydrogen from 5-enolpyruvylshikimate-3-phosphate (EPSP) to yield chorismate, which is the branch point compound that serves as the starting substrate for the three terminal pathways of aromatic amino acid biosynthesis. This reaction introduces a second double bond into the aromatic ring system. The protein is Chorismate synthase of Xanthomonas campestris pv. campestris (strain B100).